Consider the following 509-residue polypeptide: Methylmalonyl-CoA decarboxylase subunit alpha (509 aa).

The CoA carboxyltransferase N-terminal domain occupies 4–260 (VQEKIELLHE…NNMEDAPLVD (257 aa)). In terms of domain architecture, CoA carboxyltransferase C-terminal spans 267 to 503 (REDESLNSLL…SKRENRAPKK (237 aa)).

This sequence belongs to the AccD/PCCB family. As to quaternary structure, the methylmalonyl-CoA decarboxylase is composed of five subunits: the carboxyltransferase alpha subunit (MmdA), the tunnel beta subunit (MmdB), the biotin-containing gamma subunit (MmdC), and the delta (MmdD) and epsilon (MmdE) subunits. Interacts with the gamma subunit.

It is found in the cell membrane. The catalysed reaction is (S)-methylmalonyl-CoA + Na(+)(in) + H(+)(out) = propanoyl-CoA + Na(+)(out) + CO2. With respect to regulation, completely inhibited by avidin. In terms of biological role, carboxyltransferase subunit of the sodium ion pump methylmalonyl-CoA decarboxylase, which converts the chemical energy of a decarboxylation reaction into an electrochemical gradient of Na(+) ions across the cytoplasmic membrane, thereby creating a sodium ion motive force that is used for ATP synthesis. The alpha subunit catalyzes the Na(+)-independent carboxyltransfer from methylmalonyl-CoA to the prosthetic biotin group located on the gamma subunit. Can also convert malonyl-CoA into acetyl-CoA. The chain is Methylmalonyl-CoA decarboxylase subunit alpha from Veillonella parvula (Staphylococcus parvulus).